A 444-amino-acid polypeptide reads, in one-letter code: Tryptophan 5-hydroxylase 1 (444 aa).

The 76-residue stretch at 19–94 (TLIFSLKNEV…TVLSVDSPDQ (76 aa)) folds into the ACT domain. Residue serine 58 is modified to Phosphoserine; by PKA. L-tryptophan is bound by residues tyrosine 235, arginine 257, and threonine 265. The Fe cation site is built by histidine 272, histidine 277, and glutamate 317. L-tryptophan contacts are provided by serine 336 and isoleucine 366.

It belongs to the biopterin-dependent aromatic amino acid hydroxylase family. As to quaternary structure, homotetramer. Interacts with DNAJC12. The cofactor is Fe(2+). In terms of processing, ubiquitinated, leading to its degradation by the proteasome. Ubiquitinated is triggered by phosphorylation. Phosphorylated; triggering degradation by the proteasome.

The catalysed reaction is (6R)-L-erythro-5,6,7,8-tetrahydrobiopterin + L-tryptophan + O2 = 5-hydroxy-L-tryptophan + (4aS,6R)-4a-hydroxy-L-erythro-5,6,7,8-tetrahydrobiopterin. It functions in the pathway aromatic compound metabolism; serotonin biosynthesis; serotonin from L-tryptophan: step 1/2. Functionally, oxidizes L-tryptophan to 5-hydroxy-l-tryptophan in the rate-determining step of serotonin biosynthesis. The chain is Tryptophan 5-hydroxylase 1 (Tph1) from Rattus norvegicus (Rat).